The primary structure comprises 163 residues: IQSTSMDQGILTEDSMNSFIRTLIQGGIWKNKVPKQTARTKDGMQTTVKKTEAEADAMASKDTRLGFQPVVSVDAELLRQQRRFSSPRVLLSENTPLEPPPLYLTEEPMVLNRTSRRKREGKSHRGEYSVCDSESRWVTDKSSAVDIRGHQVTVLGEIRMGSS.

An N-terminal signal peptide occupies residues 1–3; that stretch reads IQS. A propeptide spanning residues 4–119 is cleaved from the precursor; the sequence is TSMDQGILTE…VLNRTSRRKR (116 aa). An N-linked (GlcNAc...) asparagine glycan is attached at asparagine 112. The interval 113–133 is disordered; the sequence is RTSRRKREGKSHRGEYSVCDS. Basic and acidic residues predominate over residues 123–133; sequence SHRGEYSVCDS.

It belongs to the NGF-beta family.

The protein resides in the secreted. Functionally, seems to promote the survival of visceral and proprioceptive sensory neurons. This Charina bottae (Northern rubber boa) protein is Neurotrophin-3 (NTF3).